The primary structure comprises 567 residues: Dihydrolipoyl dehydrogenase 2, chloroplastic (567 aa).

The transit peptide at 1 to 67 (MQSVLSLSFS…HIQSRRIEVS (67 aa)) directs the protein to the chloroplast. Residues 114–122 (EGDVVGGTC), Lys-131, Gly-197, and 221–223 (TGS) each bind FAD. Residues Cys-122 and Cys-127 are joined by a disulfide bond. NAD(+) contacts are provided by residues 258–265 (GSGYIGLE), Glu-281, and Gly-354. FAD-binding positions include Asp-400 and 406 to 409 (MLAH). Catalysis depends on His-536, which acts as the Proton acceptor.

Belongs to the class-I pyridine nucleotide-disulfide oxidoreductase family. In terms of assembly, homodimer. Part of the plastidial pyruvate dehydrogenase complex (PDC) containing multiple copies of three enzymatic components: pyruvate dehydrogenase (E1), dihydrolipoamide acetyltransferase (E2) and lipoamide dehydrogenase (E3). FAD serves as cofactor. Expressed mainly in flower buds and immature siliques, and to a lesser extent in flowers.

The protein localises to the plastid. The protein resides in the chloroplast stroma. The catalysed reaction is N(6)-[(R)-dihydrolipoyl]-L-lysyl-[protein] + NAD(+) = N(6)-[(R)-lipoyl]-L-lysyl-[protein] + NADH + H(+). Lipoamide dehydrogenase is a component of the plastidial pyruvate dehydrogenase complex (PDC). The chain is Dihydrolipoyl dehydrogenase 2, chloroplastic (LPD2) from Arabidopsis thaliana (Mouse-ear cress).